We begin with the raw amino-acid sequence, 189 residues long: Elongation factor P (189 aa).

An N6-(3,6-diaminohexanoyl)-5-hydroxylysine modification is found at Lys-34.

This sequence belongs to the elongation factor P family. Post-translationally, may be beta-lysylated on the epsilon-amino group of Lys-34 by the combined action of EpmA and EpmB, and then hydroxylated on the C5 position of the same residue by EpmC (if this protein is present). Lysylation is critical for the stimulatory effect of EF-P on peptide-bond formation. The lysylation moiety may extend toward the peptidyltransferase center and stabilize the terminal 3-CCA end of the tRNA. Hydroxylation of the C5 position on Lys-34 may allow additional potential stabilizing hydrogen-bond interactions with the P-tRNA.

It is found in the cytoplasm. It functions in the pathway protein biosynthesis; polypeptide chain elongation. Its function is as follows. Involved in peptide bond synthesis. Alleviates ribosome stalling that occurs when 3 or more consecutive Pro residues or the sequence PPG is present in a protein, possibly by augmenting the peptidyl transferase activity of the ribosome. Modification of Lys-34 is required for alleviation. The sequence is that of Elongation factor P from Idiomarina loihiensis (strain ATCC BAA-735 / DSM 15497 / L2-TR).